The primary structure comprises 894 residues: Valine--tRNA ligase (894 aa).

Positions 48–58 (PNVTGFLHMGH) match the 'HIGH' region motif. A 'KMSKS' region motif is present at residues 527–531 (KMSKS). Lys-530 lines the ATP pocket. Residues 827–852 (LVDFDEEVKRINKSIEKLTRDIGMLS) adopt a coiled-coil conformation.

It belongs to the class-I aminoacyl-tRNA synthetase family. ValS type 1 subfamily. In terms of assembly, monomer.

The protein resides in the cytoplasm. The catalysed reaction is tRNA(Val) + L-valine + ATP = L-valyl-tRNA(Val) + AMP + diphosphate. In terms of biological role, catalyzes the attachment of valine to tRNA(Val). As ValRS can inadvertently accommodate and process structurally similar amino acids such as threonine, to avoid such errors, it has a 'posttransfer' editing activity that hydrolyzes mischarged Thr-tRNA(Val) in a tRNA-dependent manner. The chain is Valine--tRNA ligase from Bdellovibrio bacteriovorus (strain ATCC 15356 / DSM 50701 / NCIMB 9529 / HD100).